Consider the following 336-residue polypeptide: Potassium channel subfamily K member 1 (336 aa).

Residues Met1 to Ala20 are Cytoplasmic-facing. A helical membrane pass occupies residues Trp21–Phe41. At Ser42 to Asp103 the chain is on the extracellular side. N-linked (GlcNAc...) asparagine glycosylation is present at Asn95. The segment at residues Phe104 to Ser116 is an intramembrane region (helical). An intramembrane segment occupies Thr117 to His122. The interval Thr117–His122 is selectivity filter 1. Residues Thr123 to Ala132 lie on the Extracellular side of the membrane. The helical transmembrane segment at Phe133 to Ile156 threads the bilayer. The Cytoplasmic portion of the chain corresponds to Thr157 to Ile181. Residues Val182–Val202 traverse the membrane as a helical segment. Over Phe203–Asn211 the chain is Extracellular. The helical intramembrane region spans Phe212 to Ser224. Residues Thr225–Asp230 are selectivity filter 2. An intramembrane segment occupies Thr225–Tyr231. Topologically, residues Val232 to Glu243 are extracellular. Residues Leu244–Phe267 form a helical membrane-spanning segment. At Cys268–His336 the chain is on the cytoplasmic side. Lys274 is covalently cross-linked (Glycyl lysine isopeptide (Lys-Gly) (interchain with G-Cter in SUMO)). The interval Ile293–Leu299 is important for intracellular retention in recycling endosomes.

The protein belongs to the two pore domain potassium channel (TC 1.A.1.8) family. Homodimer; disulfide-linked. Heterodimer with KCNK2; disulfide-linked. In astrocytes, forms mostly heterodimeric potassium channels with KCNK2, with only a minor proportion of functional channels containing homodimeric KCNK1. Interacts with KCNK3 and KCNK9, forming functional heterodimeric channels. Interacts with GNG4. Identified in a complex with PSD and ARF6; interacts only with PSD that is bound to ARF6. Interacts with UBE2I. In terms of processing, sumoylation is controversial. Sumoylated by UBE2I. Not sumoylated when expressed in xenopus oocytes or mammalian cells. Sumoylation inactivates the channel, but does not interfere with expression at the cell membrane. Sumoylation of a single subunit is sufficient to silence the dimeric channel. Sumoylation of KCNK1 is sufficient to silence heterodimeric channels formed by KCNK1 and KCNK3 or KCNK9. Desumoylated by SENP1; this activates the channel. Desumoylated by SENP1; this strongly increases halothane-mediated activation of heterodimeric channels formed with KCNK9. SENP1 treatment has no effect.

It localises to the cell membrane. It is found in the recycling endosome. Its subcellular location is the synaptic cell membrane. The protein localises to the cytoplasmic vesicle. The protein resides in the perikaryon. It localises to the cell projection. It is found in the dendrite. Its subcellular location is the apical cell membrane. It carries out the reaction K(+)(in) = K(+)(out). It catalyses the reaction NH4(+)(in) = NH4(+)(out). The catalysed reaction is Na(+)(in) = Na(+)(out). The enzyme catalyses Rb(+)(in) = Rb(+)(out). It carries out the reaction Cs(+)(in) = Cs(+)(out). It catalyses the reaction Li(+)(in) = Li(+)(out). The catalysed reaction is L-glutamate(out) = L-glutamate(in). The enzyme catalyses chloride(in) = chloride(out). Ion channel that contributes to passive transmembrane potassium transport and to the regulation of the resting membrane potential in brain astrocytes, but also in kidney and in other tissues. Forms dimeric channels through which potassium ions pass in accordance with their electrochemical gradient. The channel is selective for K(+) ions at physiological potassium concentrations and at neutral pH, but becomes permeable to Na(+) at subphysiological K(+) levels and upon acidification of the extracellular medium. The homodimer has very low potassium channel activity, when expressed in heterologous systems, and can function as weakly inward rectifying potassium channel. Channel activity is modulated by activation of serotonin receptors. Heterodimeric channels containing KCNK1 and KCNK2 have much higher activity, and may represent the predominant form in astrocytes. Heterodimeric channels containing KCNK1 and KCNK3 or KCNK9 have much higher activity. Heterodimeric channels formed by KCNK1 and KCNK9 may contribute to halothane-sensitive currents. Mediates outward rectifying potassium currents in dentate gyrus granule cells and contributes to the regulation of their resting membrane potential. Contributes to the regulation of action potential firing in dentate gyrus granule cells and down-regulates their intrinsic excitability. In astrocytes, the heterodimer formed by KCNK1 and KCNK2 is required for rapid glutamate release in response to activation of G-protein coupled receptors, such as F2R and CNR1. Required for normal ion and water transport in the kidney. Contributes to the regulation of the resting membrane potential of pancreatic beta cells. The low channel activity of homodimeric KCNK1 may be due to sumoylation. The low channel activity may be due to rapid internalization from the cell membrane and retention in recycling endosomes. Permeable to monovalent cations with ion selectivity for K(+) &gt; Rb(+) &gt;&gt; NH4(+) &gt;&gt; Cs(+) = Na(+) = Li(+). This Cavia porcellus (Guinea pig) protein is Potassium channel subfamily K member 1.